A 507-amino-acid chain; its full sequence is Alpha-amylase 2 (507 aa).

The signal sequence occupies residues M1 to S20. An intrachain disulfide couples C62 to C70. Position 115 (W115) interacts with substrate. N153 contacts Ca(2+). H154 serves as a coordination point for substrate. Cysteines 182 and 196 form a disulfide. 2 residues coordinate Ca(2+): E194 and D207. N-linked (GlcNAc...) asparagine glycosylation is present at N229. R236 provides a ligand contact to substrate. Residues D238, H242, and E262 each contribute to the Ca(2+) site. D238 functions as the Nucleophile in the catalytic mechanism. K241 to H242 provides a ligand contact to substrate. E262 functions as the Proton donor in the catalytic mechanism. G266 contacts substrate. Cysteines 272 and 315 form a disulfide. Residues D329 and R376 each coordinate substrate. Cysteines 470 and 505 form a disulfide.

The protein belongs to the glycosyl hydrolase 13 family. Ca(2+) is required as a cofactor.

It carries out the reaction Endohydrolysis of (1-&gt;4)-alpha-D-glucosidic linkages in polysaccharides containing three or more (1-&gt;4)-alpha-linked D-glucose units.. The chain is Alpha-amylase 2 (SWA2) from Schwanniomyces occidentalis (Yeast).